The sequence spans 1009 residues: Epstein-Barr nuclear antigen 6 (1009 aa).

Disordered regions lie at residues 1-70, 356-504, 516-646, 663-922, 948-971, and 984-1009; these read MESF…RGWM, TVGE…GACV, VETT…PRPS, QPIQ…DSMA, PLDINATTPKRPRVEESSHGPARC, and DNSEISVFPKDAKQTDYDASTESELD. The span at 12 to 31 shows a compositional bias: basic and acidic residues; the sequence is QSPDNERGDNVQTTGEHDQD. Acidic residues predominate over residues 381–391; it reads VELESSDDELP. The span at 445-461 shows a compositional bias: polar residues; the sequence is AQSTPERPGPSEQSSVT. Pro residues-rich tracts occupy residues 479–495 and 563–574; these read QPPPVPKPVPVKPTPPP and AAGPPAAGPPAA. Polar residues-rich tracts occupy residues 622–641 and 664–679; these read EITQMQQEPSSHLQSATQPT and PIQSSHLSSMSPTQPI. Positions 680 to 689 are enriched in basic and acidic residues; sequence SHEEQPRYED. 2 stretches are compositionally biased toward low complexity: residues 710 to 769 and 776 to 798; these read APYQ…GYQE and PYQGYQEQPAPQAPYQGYQEPPA. Polar residues predominate over residues 862–874; it reads DQVSQFPHLQSET. Low complexity predominate over residues 876–898; it reads PPRLQLSSVPLVSSSAPSWSSPQ. Positions 899–916 are enriched in pro residues; the sequence is PRAPIRPIPTRFPPPPMP.

The protein belongs to the herpesviridae EBNA-6 family. Interacts with host CTPB1; this interaction leads to gene repression, but also seems to interfere with the repressive function of CtBP pre-bound to DNA, leading to EBNA6 mediated up-regulation of many host genes. Interacts with host MYC; this interaction enhances MYC stability. Interacts (via N-terminus) with host RBPJ. Interacts (via N-terminus) with host histone H2AX; this interaction facilitates H2AX proteasomal degradation. Interacts with host TP73; this interaction inhibits TP73-mediated apoptotic pathway. Interacts (via N-terminus) with host PIM1; this interaction upregulates and stabilizes PIM1 and induces cell proliferation by inhibiting the growth suppressive properties of p21.

The protein resides in the host nucleus. The protein localises to the host nucleus matrix. Functionally, plays an essential role for the activation and immortalization of human B-cells. Represses transcription of viral promoters TP1 and Cp through interaction with host RBPJ, and inhibits EBNA2-mediated activation of these promoters. Targets host chromatin through interactions with host transcription factors, especially RBPJ and IRF4. Alternatively, EBNA6 also regulates the transcription of the EBV oncogene LMP1 in a cell cycle-dependent manner. Modulates the activity of several host proteins involved in cell cycle regulation including host cyclin A, MYC, RB, p21 and p27 mainly through binding to the host SCF(SKP2) complex. Inhibits the promoter of host H2AX and targets H2AX to proteasomal degradation in order to promote latency and cell proliferation. Upregulates host PIM1 expression and stabilization. Potentiates PIM1 to promote cell proliferation by inhibiting the growth suppressive properties of p21. The protein is Epstein-Barr nuclear antigen 6 (EBNA6) of Epstein-Barr virus (strain GD1) (HHV-4).